The following is a 509-amino-acid chain: Cytochrome P450 4A10 (509 aa).

The next 2 membrane-spanning stretches (helical) occupy residues 11-31 and 121-141; these read FTGS…LLLL and LLAP…WFQH. Glu320 lines the heme pocket. Ser439 carries the post-translational modification Phosphoserine. A heme-binding site is contributed by Cys456.

This sequence belongs to the cytochrome P450 family. It depends on heme as a cofactor. Expressed in liver (at protein level) and kidney (at protein level).

The protein resides in the endoplasmic reticulum membrane. It localises to the microsome membrane. It carries out the reaction an omega-methyl-long-chain fatty acid + reduced [NADPH--hemoprotein reductase] + O2 = an omega-hydroxy-long-chain fatty acid + oxidized [NADPH--hemoprotein reductase] + H2O + H(+). The enzyme catalyses dodecanoate + reduced [NADPH--hemoprotein reductase] + O2 = 12-hydroxydodecanoate + oxidized [NADPH--hemoprotein reductase] + H2O + H(+). The catalysed reaction is dodecanoate + reduced [NADPH--hemoprotein reductase] + O2 = 11-hydroxydodecanoate + oxidized [NADPH--hemoprotein reductase] + H2O + H(+). It catalyses the reaction tetradecanoate + reduced [NADPH--hemoprotein reductase] + O2 = 14-hydroxytetradecanoate + oxidized [NADPH--hemoprotein reductase] + H2O + H(+). It carries out the reaction hexadecanoate + reduced [NADPH--hemoprotein reductase] + O2 = 16-hydroxyhexadecanoate + oxidized [NADPH--hemoprotein reductase] + H2O + H(+). The enzyme catalyses (9Z)-octadecenoate + reduced [NADPH--hemoprotein reductase] + O2 = 18-hydroxy-(9Z)-octadecenoate + oxidized [NADPH--hemoprotein reductase] + H2O + H(+). The catalysed reaction is (9Z,12Z)-octadecadienoate + reduced [NADPH--hemoprotein reductase] + O2 = 18-hydroxy-(9Z,12Z)-octadecadienoate + oxidized [NADPH--hemoprotein reductase] + H2O + H(+). It catalyses the reaction (9Z,12Z)-octadecadienoate + reduced [NADPH--hemoprotein reductase] + O2 = 17-hydroxy-(9Z,12Z)-octadecadienoate + oxidized [NADPH--hemoprotein reductase] + H2O + H(+). It carries out the reaction (5Z,8Z,11Z,14Z)-eicosatetraenoate + reduced [NADPH--hemoprotein reductase] + O2 = 20-hydroxy-(5Z,8Z,11Z,14Z)-eicosatetraenoate + oxidized [NADPH--hemoprotein reductase] + H2O + H(+). The enzyme catalyses 8,9-epoxy-(5Z,11Z,14Z)-eicosatrienoate + reduced [NADPH--hemoprotein reductase] + O2 = 20-hydroxy-8,9-epoxy-(5Z,11Z,14Z)-eicosatrienoate + oxidized [NADPH--hemoprotein reductase] + H2O + H(+). Its function is as follows. A cytochrome P450 monooxygenase involved in the metabolism of fatty acids. Catalyzes predominantly the oxidation of the terminal carbon (omega-oxidation) of long-chain fatty acids. Acts as a major omega-hydroxylase for dodecanoic (lauric) acid in liver. In kidney, may play an important role in omega-hydroxylation of (5Z,8Z,11Z,14Z)-eicosatetraenoic acid (arachidonate) to 20-hydroxyeicosatetraenoic acid (20-HETE), a signaling molecule acting both as vasoconstrictive and natriuretic with overall effect on arterial blood pressure. Also participates in the formation of anti-inflammatory hydroxyepoxyeicosatrienoic acids (HEETs) in kidney by converting 8,9-epoxyeicosatrienoic acid (EET) to 20,8,9-HEET, an activator of PPARA. Displays substantially lower fatty acid omega-1 hydroxylase activity. Mechanistically, uses molecular oxygen inserting one oxygen atom into a substrate, and reducing the second into a water molecule, with two electrons provided by NADPH via cytochrome P450 reductase (CPR; NADPH-ferrihemoprotein reductase). This chain is Cytochrome P450 4A10 (Cyp4a10), found in Rattus norvegicus (Rat).